The sequence spans 581 residues: Ketol-acid reductoisomerase, chloroplastic (581 aa).

The N-terminal 50 residues, 1-50 (MAAVTSSCSTAISASSKTLAKPVAASFAPTNLSFSKLSPQSIRARRSITV), are a transit peptide targeting the chloroplast. One can recognise a KARI N-terminal Rossmann domain in the interval 92–290 (VRGGRDLFHL…ALGSPFTFAT (199 aa)). Residues 113 to 120 (GVIGWGSQ), 146 to 151 (RKGSSS), and 185 to 189 (SDSAQ) each bind NADP(+). The active site involves His-210. 2 consecutive KARI C-terminal knotted domains span residues 291–439 (TLEQ…RPAG) and 440–576 (DLGP…RPEL). Mg(2+) is bound by residues Asp-299, Glu-303, Glu-476, and Glu-480. Residue Ser-502 participates in substrate binding.

Belongs to the ketol-acid reductoisomerase family. In terms of assembly, homodimer. Mg(2+) is required as a cofactor.

Its subcellular location is the plastid. It localises to the chloroplast. The enzyme catalyses (2R)-2,3-dihydroxy-3-methylbutanoate + NADP(+) = (2S)-2-acetolactate + NADPH + H(+). The catalysed reaction is (2R,3R)-2,3-dihydroxy-3-methylpentanoate + NADP(+) = (S)-2-ethyl-2-hydroxy-3-oxobutanoate + NADPH + H(+). Its pathway is amino-acid biosynthesis; L-isoleucine biosynthesis; L-isoleucine from 2-oxobutanoate: step 2/4. It participates in amino-acid biosynthesis; L-valine biosynthesis; L-valine from pyruvate: step 2/4. The protein is Ketol-acid reductoisomerase, chloroplastic (PGAAIR) of Pisum sativum (Garden pea).